The following is a 391-amino-acid chain: Immediate-early protein 2 (391 aa).

This sequence belongs to the herpesviridae US22 family.

It is found in the host cytoplasm. It localises to the host nucleus. In terms of biological role, involved in the reactivation of latent MCMV in spleen cells. The chain is Immediate-early protein 2 (IE2) from Murid herpesvirus 1 (strain Smith) (MuHV-1).